The primary structure comprises 773 residues: Mitogen-activated protein kinase kinase kinase 9 (773 aa).

Positions 1–14 are enriched in basic and acidic residues; sequence MKKSSDKSPVRQHD. The segment at 1–35 is disordered; that stretch reads MKKSSDKSPVRQHDTATQINSDAVSSSTSFTDSDS. Low complexity predominate over residues 21–35; that stretch reads SDAVSSSTSFTDSDS. Ser79 and Ser150 each carry phosphoserine. The tract at residues 100–493 is regulatory region; sequence FDKILALMKK…VSNTSPICVS (394 aa). A Phosphoserine; by MAPK4 modification is found at Ser365. The interval 426–455 is disordered; the sequence is EIVRRPSSSSSSENGCDEEEAEDDKVEKEE. The segment covering 440–449 has biased composition (acidic residues); the sequence is GCDEEEAEDD. The 255-residue stretch at 501–755 folds into the Protein kinase domain; it reads WQKGQLLRQG…ATELLNHPFV (255 aa). ATP is bound by residues 507-515 and Lys529; that span reads LRQGSFGSV. The Proton acceptor role is filled by Asp624. At Ser768 the chain carries Phosphoserine.

Belongs to the protein kinase superfamily. STE Ser/Thr protein kinase family. MAP kinase kinase kinase subfamily. As to quaternary structure, interacts with MPK4. Phosphorylated by MPK4 upon treatment with flg22. As to expression, expressed at least in rosette leaves (at protein level).

The enzyme catalyses L-seryl-[protein] + ATP = O-phospho-L-seryl-[protein] + ADP + H(+). It catalyses the reaction L-threonyl-[protein] + ATP = O-phospho-L-threonyl-[protein] + ADP + H(+). Its function is as follows. Triggers SUMM2-mediated immune responses, including cell death and defense responses. Probably inhibited by the MEKK1-MKK1/ MKK2-MPK4 kinase cascade to adjust plant defense. Seems to contribute in transducing external glutamate (L-Glu) signal that elicits large-scale changes in root architecture. This is Mitogen-activated protein kinase kinase kinase 9 from Arabidopsis thaliana (Mouse-ear cress).